The sequence spans 238 residues: Large ribosomal subunit protein uL3 (238 aa).

2 disordered regions span residues 140 to 164 and 212 to 238; these read SHRS…KMPG and LPKE…QEGA. Gln151 is subject to N5-methylglutamine. The span at 225 to 238 shows a compositional bias: low complexity; it reads AGGEAEAAAQQEGA.

The protein belongs to the universal ribosomal protein uL3 family. As to quaternary structure, part of the 50S ribosomal subunit. Forms a cluster with proteins L14 and L19. Methylated by PrmB.

In terms of biological role, one of the primary rRNA binding proteins, it binds directly near the 3'-end of the 23S rRNA, where it nucleates assembly of the 50S subunit. The polypeptide is Large ribosomal subunit protein uL3 (Bradyrhizobium diazoefficiens (strain JCM 10833 / BCRC 13528 / IAM 13628 / NBRC 14792 / USDA 110)).